Consider the following 821-residue polypeptide: V-type proton ATPase subunit a3 (821 aa).

Alanine 2 bears the N-acetylalanine mark. The Cytoplasmic segment spans residues 2-421 (AESGGGGGCC…ANPGVFTIVT (420 aa)). Residues 97–144 (KENDIDLDDVEVKLGELEAELVEINANNDKLQRSYNELMEYKLVLQKA) adopt a coiled-coil conformation. Serine 174 is subject to Phosphoserine. A helical membrane pass occupies residues 422–442 (FPFLFAVMFGDWGHGICILLA). Residues 443 to 469 (TMYLILKEKKLASQKLGDIMEMAFGGR) are Vacuolar-facing. The chain crosses the membrane as a helical span at residues 470 to 490 (YVILMMSLFSIYTGLIYNEFF). Topologically, residues 491–548 (SIPFPLFAPSAYDCRDVSCSEATTIGLIKVRDTYPFGLDPVWHGSRSELPFLNSLKMK) are cytoplasmic. Residues 549–569 (MSILLGVSQMNLGIIMSYFNA) form a helical membrane-spanning segment. The Vacuolar segment spans residues 570–581 (RFFKSSVNIWFQ). Residues 582-602 (FIPQMIFLNSLFGYLSVLIII) traverse the membrane as a helical segment. Residues 603-640 (KWCTGSQADLYHVMIYMFLSPMDELGENQLFPHQKTLQ) are Cytoplasmic-facing. A helical membrane pass occupies residues 641–661 (LVLLFLALVSVPCMLLPKPFI). Residues 662–758 (LKKQHEARHQ…LLLAWGYNNP (97 aa)) are Vacuolar-facing. The chain crosses the membrane as a helical span at residues 759-779 (LILIVGVLVFIFATVGVLLVM). At 780-821 (ETLSAFLHALRLHWVEFQNKFYEGDGYKFAPFTFIFTANEDE) the chain is on the cytoplasmic side.

It belongs to the V-ATPase 116 kDa subunit family. In terms of assembly, V-ATPase is a heteromultimeric enzyme composed of a peripheral catalytic V1 complex (components A to H) attached to an integral membrane V0 proton pore complex (components: a, c, c'', d and e). In terms of tissue distribution, expressed in etiolated seedlings hypocotyls.

It is found in the vacuole membrane. Its function is as follows. Essential component of the vacuolar proton pump (V-ATPase), a multimeric enzyme that catalyzes the translocation of protons across the membranes. Required for assembly and activity of the V-ATPase. Involved in vacuolar nutrient storage (e.g. accumulation and storage of nitrate) and in tolerance to some toxic ions (e.g. zinc ions sequestration in vacuoles). This is V-type proton ATPase subunit a3 (VHA-a3) from Arabidopsis thaliana (Mouse-ear cress).